Consider the following 129-residue polypeptide: Phosphoribosyl-AMP cyclohydrolase (129 aa).

Mg(2+) is bound at residue aspartate 86. Position 87 (cysteine 87) interacts with Zn(2+). 2 residues coordinate Mg(2+): aspartate 88 and aspartate 90. Zn(2+) is bound by residues cysteine 104 and cysteine 111.

Belongs to the PRA-CH family. Homodimer. The cofactor is Mg(2+). Requires Zn(2+) as cofactor.

Its subcellular location is the cytoplasm. It carries out the reaction 1-(5-phospho-beta-D-ribosyl)-5'-AMP + H2O = 1-(5-phospho-beta-D-ribosyl)-5-[(5-phospho-beta-D-ribosylamino)methylideneamino]imidazole-4-carboxamide. It participates in amino-acid biosynthesis; L-histidine biosynthesis; L-histidine from 5-phospho-alpha-D-ribose 1-diphosphate: step 3/9. Functionally, catalyzes the hydrolysis of the adenine ring of phosphoribosyl-AMP. This is Phosphoribosyl-AMP cyclohydrolase from Ignicoccus hospitalis (strain KIN4/I / DSM 18386 / JCM 14125).